A 450-amino-acid polypeptide reads, in one-letter code: Plasminogen-binding protein PgbA (450 aa).

Composition is skewed to basic and acidic residues over residues 262-273, 284-310, and 317-362; these read EIKQEAIKEPKK, LEEK…DERK, and KAME…REIN. The disordered stretch occupies residues 262-450; it reads EIKQEAIKEP…RRKALEMNKK (189 aa). Residues 363 to 386 are compositionally biased toward polar residues; the sequence is QESANEPSSENNATLKDTENTSVL. Residues 389 to 450 show a composition bias toward basic and acidic residues; sequence SAAKKEAPKP…RRKALEMNKK (62 aa).

It localises to the cell surface. Its function is as follows. Binds plasminogen, specifically, and in a concentration and lysine-dependent manner. Plasminogen is the precursor of plasmin, a serine protease that cleaves fibrin, fibronectin, laminin and vitronectin. Acquisition of plasminogen/plasmin could enable H.pylori to degrade host components. In Helicobacter pylori (strain J99 / ATCC 700824) (Campylobacter pylori J99), this protein is Plasminogen-binding protein PgbA (pgbA).